The sequence spans 88 residues: Putative membrane protein insertion efficiency factor (88 aa).

Positions 65-88 (LDFVPPKKDKNDDSGHTCKAHHHH) are disordered. The span at 69–80 (PPKKDKNDDSGH) shows a compositional bias: basic and acidic residues.

Belongs to the UPF0161 family.

Its subcellular location is the cell membrane. Functionally, could be involved in insertion of integral membrane proteins into the membrane. This chain is Putative membrane protein insertion efficiency factor, found in Listeria innocua serovar 6a (strain ATCC BAA-680 / CLIP 11262).